Consider the following 113-residue polypeptide: Large ribosomal subunit protein bL17 (113 aa).

It belongs to the bacterial ribosomal protein bL17 family. As to quaternary structure, part of the 50S ribosomal subunit. Contacts protein L32.

The polypeptide is Large ribosomal subunit protein bL17 (Clostridium beijerinckii (strain ATCC 51743 / NCIMB 8052) (Clostridium acetobutylicum)).